Consider the following 379-residue polypeptide: Cytochrome b (379 aa).

4 consecutive transmembrane segments (helical) span residues 33–53 (FGSL…FLAM), 77–98 (WLIR…YLHI), 113–133 (WNIG…GYVL), and 178–198 (FFAF…IHLL). His83 and His97 together coordinate heme b. Positions 182 and 196 each coordinate heme b. His201 contacts a ubiquinone. Helical transmembrane passes span 226 to 246 (YKDL…ALFY), 288 to 308 (LGGV…PILH), 320 to 340 (ASQL…WIGG), and 347 to 367 (YIII…VLNP).

It belongs to the cytochrome b family. As to quaternary structure, the cytochrome bc1 complex contains 3 respiratory subunits (MT-CYB, CYC1 and UQCRFS1), 2 core proteins (UQCRC1 and UQCRC2) and probably 6 low-molecular weight proteins. Heme b is required as a cofactor.

It is found in the mitochondrion inner membrane. Component of the ubiquinol-cytochrome c reductase complex (complex III or cytochrome b-c1 complex) that is part of the mitochondrial respiratory chain. The b-c1 complex mediates electron transfer from ubiquinol to cytochrome c. Contributes to the generation of a proton gradient across the mitochondrial membrane that is then used for ATP synthesis. The polypeptide is Cytochrome b (mt-cyb) (Anguilla reinhardtii (Speckled longfin eel)).